Consider the following 321-residue polypeptide: tRNA uridine(34) hydroxylase (321 aa).

A Rhodanese domain is found at 135-233 (DDPLTLVIDT…YLEEVPENES (99 aa)). The active-site Cysteine persulfide intermediate is Cys193.

The protein belongs to the TrhO family.

It carries out the reaction uridine(34) in tRNA + AH2 + O2 = 5-hydroxyuridine(34) in tRNA + A + H2O. Its function is as follows. Catalyzes oxygen-dependent 5-hydroxyuridine (ho5U) modification at position 34 in tRNAs. The chain is tRNA uridine(34) hydroxylase from Prochlorococcus marinus (strain SARG / CCMP1375 / SS120).